Here is a 396-residue protein sequence, read N- to C-terminus: S-arrestin (396 aa).

The span at Ala375 to Glu386 shows a compositional bias: basic and acidic residues. The tract at residues Ala375–Lys396 is disordered. The span at Glu387 to Lys396 shows a compositional bias: acidic residues.

It belongs to the arrestin family. Interacts with RHO (via the phosphorylated C-terminus).

The protein resides in the cell projection. It localises to the cilium. It is found in the photoreceptor outer segment. The protein localises to the membrane. Its function is as follows. Binds to photoactivated, phosphorylated RHO and terminates RHO signaling via G-proteins by competing with G-proteins for the same binding site on RHO. May play a role in preventing light-dependent degeneration of retinal photoreceptor cells. This Xenopus laevis (African clawed frog) protein is S-arrestin (sag).